We begin with the raw amino-acid sequence, 238 residues long: Pyridoxine 5'-phosphate synthase (238 aa).

Asparagine 7 provides a ligand contact to 3-amino-2-oxopropyl phosphate. 9-10 (DH) contacts 1-deoxy-D-xylulose 5-phosphate. Arginine 18 contacts 3-amino-2-oxopropyl phosphate. The active-site Proton acceptor is the histidine 43. Residues arginine 45 and histidine 50 each coordinate 1-deoxy-D-xylulose 5-phosphate. Glutamate 70 functions as the Proton acceptor in the catalytic mechanism. A 1-deoxy-D-xylulose 5-phosphate-binding site is contributed by threonine 100. Histidine 191 serves as the catalytic Proton donor. 3-amino-2-oxopropyl phosphate-binding positions include glycine 192 and 213-214 (GH).

It belongs to the PNP synthase family. As to quaternary structure, homooctamer; tetramer of dimers.

The protein localises to the cytoplasm. The catalysed reaction is 3-amino-2-oxopropyl phosphate + 1-deoxy-D-xylulose 5-phosphate = pyridoxine 5'-phosphate + phosphate + 2 H2O + H(+). It functions in the pathway cofactor biosynthesis; pyridoxine 5'-phosphate biosynthesis; pyridoxine 5'-phosphate from D-erythrose 4-phosphate: step 5/5. Its function is as follows. Catalyzes the complicated ring closure reaction between the two acyclic compounds 1-deoxy-D-xylulose-5-phosphate (DXP) and 3-amino-2-oxopropyl phosphate (1-amino-acetone-3-phosphate or AAP) to form pyridoxine 5'-phosphate (PNP) and inorganic phosphate. This chain is Pyridoxine 5'-phosphate synthase, found in Thermosynechococcus vestitus (strain NIES-2133 / IAM M-273 / BP-1).